We begin with the raw amino-acid sequence, 108 residues long: UPF0060 membrane protein CKO_01576 (108 aa).

A run of 4 helical transmembrane segments spans residues 6–26 (LLFF…WLWL), 29–49 (GATA…VWLL), 61–81 (AAYG…VDGV), and 85–105 (LYDW…VAGW).

The protein belongs to the UPF0060 family.

It is found in the cell inner membrane. The protein is UPF0060 membrane protein CKO_01576 of Citrobacter koseri (strain ATCC BAA-895 / CDC 4225-83 / SGSC4696).